The primary structure comprises 256 residues: Carboxysome shell protein CsoS1D (256 aa).

The segment at 1–24 (MEPTSSLNRGDRKKGSSLVTGSEV) is disordered. BMC circularly permuted domains follow at residues 55 to 157 (ELRT…RTKP) and 158 to 256 (STSW…ISNY). Positions 120 to 121 (ER) match the Gates the pore motif.

This sequence belongs to the EutL/PduB family. As to quaternary structure, homotrimer. Forms a dimer of stacked trimers, the same faces interact. A CsoS1-CsoS1D-CsoS2 complex can be isolated following expression in E.coli.

It localises to the carboxysome. Functionally, part of the carboxysome shell, a polyhedral inclusion where RuBisCO (ribulose bisphosphate carboxylase, cbbL-cbbS) is sequestered. It may control transport of RuBisCO reactants in and out of the carboxysome. There are estimated to be 6 CsoS1D hexamers per carboxysome. The sequence is that of Carboxysome shell protein CsoS1D from Prochlorococcus marinus subsp. pastoris (strain CCMP1986 / NIES-2087 / MED4).